The primary structure comprises 859 residues: DNA-directed RNA polymerase subunit Rpo1C (859 aa).

Belongs to the RNA polymerase beta' chain family. In terms of assembly, part of the RNA polymerase complex. This protein undergoes a protein self splicing that involves a post-translational excision of the intervening region (intein) followed by peptide ligation.

It is found in the cytoplasm. It carries out the reaction RNA(n) + a ribonucleoside 5'-triphosphate = RNA(n+1) + diphosphate. DNA-dependent RNA polymerase (RNAP) catalyzes the transcription of DNA into RNA using the four ribonucleoside triphosphates as substrates. Forms part of the jaw domain. This Methanocaldococcus jannaschii (strain ATCC 43067 / DSM 2661 / JAL-1 / JCM 10045 / NBRC 100440) (Methanococcus jannaschii) protein is DNA-directed RNA polymerase subunit Rpo1C.